The primary structure comprises 164 residues: UPF0303 protein Smed_2872 (164 aa).

Belongs to the UPF0303 family.

This is UPF0303 protein Smed_2872 from Sinorhizobium medicae (strain WSM419) (Ensifer medicae).